Consider the following 197-residue polypeptide: Translation machinery-associated protein 22 (197 aa).

Residues Val102–Tyr173 enclose the SUI1 domain.

Belongs to the DENR family. In terms of assembly, interacts with the 40S ribosomal subunit.

It localises to the cytoplasm. This is Translation machinery-associated protein 22 (tma22) from Aspergillus niger (strain ATCC MYA-4892 / CBS 513.88 / FGSC A1513).